The following is a 197-amino-acid chain: Fe/S biogenesis protein NfuA (197 aa).

[4Fe-4S] cluster contacts are provided by C155 and C158.

Belongs to the NfuA family. As to quaternary structure, homodimer. [4Fe-4S] cluster serves as cofactor.

Involved in iron-sulfur cluster biogenesis. Binds a 4Fe-4S cluster, can transfer this cluster to apoproteins, and thereby intervenes in the maturation of Fe/S proteins. Could also act as a scaffold/chaperone for damaged Fe/S proteins. The chain is Fe/S biogenesis protein NfuA from Pseudomonas savastanoi pv. phaseolicola (strain 1448A / Race 6) (Pseudomonas syringae pv. phaseolicola (strain 1448A / Race 6)).